A 27-amino-acid chain; its full sequence is Small integral membrane protein 43 (27 aa).

Positions 15–21 (HREPWGF) are important for interaction with SLC2A1 and SLC2A3.

In terms of assembly, interacts with glucose transporters SLC2A1/GLUT1 and SLC2A3/GLUT3; the interactions may promote SLC2A1- and SLC2A3-mediated glucose transport to meet the energy needs of mesendoderm differentiation.

The protein localises to the cell membrane. In terms of biological role, required for mesendoderm differentiation. Interacts with glucose transporters and promotes glucose uptake. Probably augments the glucose uptake capacity of glucose transporter proteins to meet the energy needs of mesendoderm differentiation. This Pongo abelii (Sumatran orangutan) protein is Small integral membrane protein 43.